Reading from the N-terminus, the 305-residue chain is Cysteine synthase (305 aa).

Lysine 45 carries the N6-(pyridoxal phosphate)lysine modification. Pyridoxal 5'-phosphate-binding positions include asparagine 75, 179 to 183 (GSGGT), and serine 266.

It belongs to the cysteine synthase/cystathionine beta-synthase family. As to quaternary structure, homodimer. It depends on pyridoxal 5'-phosphate as a cofactor.

It carries out the reaction O-acetyl-L-serine + hydrogen sulfide = L-cysteine + acetate. The protein operates within amino-acid biosynthesis; L-cysteine biosynthesis; L-cysteine from L-serine: step 2/2. This is Cysteine synthase (cysM) from Helicobacter pylori (strain J99 / ATCC 700824) (Campylobacter pylori J99).